Here is a 121-residue protein sequence, read N- to C-terminus: SPbeta prophage-derived uncharacterized protein YorW (121 aa).

The protein is SPbeta prophage-derived uncharacterized protein YorW (yorW) of Bacillus subtilis (strain 168).